We begin with the raw amino-acid sequence, 239 residues long: Tetraspanin-9 (239 aa).

Topologically, residues 1 to 13 are cytoplasmic; sequence MARGCLCCLKYTM. The chain crosses the membrane as a helical span at residues 14-34; sequence FLFNLIFWLCGCGLLGVGIWL. The Extracellular portion of the chain corresponds to 35–55; sequence SVSQGNFATFSPSFPSLSAAN. A helical membrane pass occupies residues 56-76; that stretch reads LVIAIGTIVMVTGFLGCLGAI. The Cytoplasmic segment spans residues 77 to 85; it reads KENKCLLLS. A helical transmembrane segment spans residues 86 to 106; it reads FFIVLLIILLAELILIILFFV. Residues 107–203 are Extracellular-facing; sequence YMDKVNENAK…VKLWFDDNKH (97 aa). N-linked (GlcNAc...) asparagine glycosylation occurs at asparagine 180. The chain crosses the membrane as a helical span at residues 204-224; it reads VLGTVGMCILIMQILGMAFSM. At 225-239 the chain is on the cytoplasmic side; sequence TLFQHIHRTGKKYDA.

Belongs to the tetraspanin (TM4SF) family. As to quaternary structure, found in a complex with GP6. In terms of processing, glycosylated. In terms of tissue distribution, strongly expressed in megakaryocytes, platelets and lung. Weakly expressed in bone marrow, brain and kidney (at protein level).

The protein resides in the membrane. This is Tetraspanin-9 (Tspan9) from Mus musculus (Mouse).